The sequence spans 370 residues: Glucan endo-1,3-beta-glucosidase (370 aa).

An N-terminal signal peptide occupies residues 1–32 (MASFFARTRRFSLVSLFLLELFTINLIPTTDA). The residue at position 33 (Gln-33) is a Pyrrolidone carboxylic acid. Glu-127 acts as the Proton donor in catalysis. The active-site Nucleophile is Glu-272. Positions 348-370 (GERRDGEIVEGDFNGTVSLKSDM) are cleaved as a propeptide — removed in mature form. N-linked (GlcNAc...) asparagine glycosylation is present at Asn-361.

The protein belongs to the glycosyl hydrolase 17 family. As to expression, constitutively expressed in seedling roots.

The catalysed reaction is Hydrolysis of (1-&gt;3)-beta-D-glucosidic linkages in (1-&gt;3)-beta-D-glucans.. Functionally, implicated in the defense of plants against pathogens. The protein is Glucan endo-1,3-beta-glucosidase of Pisum sativum (Garden pea).